The sequence spans 271 residues: D-methionine-binding lipoprotein MetQ (271 aa).

A signal peptide spans 1-22 (MSLKFKSIAAISALIGTLTLVG). Cys23 carries N-palmitoyl cysteine lipidation. A lipid anchor (S-diacylglycerol cysteine) is attached at Cys23.

It belongs to the NlpA lipoprotein family.

It is found in the cell membrane. Functionally, this protein is a component of a D-methionine permease, a binding protein-dependent, ATP-driven transport system. The chain is D-methionine-binding lipoprotein MetQ (metQ) from Yersinia pestis.